The chain runs to 485 residues: Membrane-bound lytic murein transglycosylase F (485 aa).

Residues 1-29 (MFAHTALRQRCAKWLLATGLFLLLGACVE) form the signal peptide. Residues 30–267 (KPSTLERVKE…RLKDRYYGHV (238 aa)) are non-LT domain. Residues 268–485 (DVLGYVGAYT…DKPADKSSPM (218 aa)) are LT domain. Glu-314 is an active-site residue. Positions 465 to 485 (EGNLHVPGVNKDKPADKSSPM) are disordered. Over residues 474–485 (NKDKPADKSSPM) the composition is skewed to basic and acidic residues.

It in the N-terminal section; belongs to the bacterial solute-binding protein 3 family. This sequence in the C-terminal section; belongs to the transglycosylase Slt family.

The protein resides in the cell outer membrane. The catalysed reaction is Exolytic cleavage of the (1-&gt;4)-beta-glycosidic linkage between N-acetylmuramic acid (MurNAc) and N-acetylglucosamine (GlcNAc) residues in peptidoglycan, from either the reducing or the non-reducing ends of the peptidoglycan chains, with concomitant formation of a 1,6-anhydrobond in the MurNAc residue.. Its function is as follows. Murein-degrading enzyme that degrades murein glycan strands and insoluble, high-molecular weight murein sacculi, with the concomitant formation of a 1,6-anhydromuramoyl product. Lytic transglycosylases (LTs) play an integral role in the metabolism of the peptidoglycan (PG) sacculus. Their lytic action creates space within the PG sacculus to allow for its expansion as well as for the insertion of various structures such as secretion systems and flagella. In Pseudomonas putida (strain ATCC 700007 / DSM 6899 / JCM 31910 / BCRC 17059 / LMG 24140 / F1), this protein is Membrane-bound lytic murein transglycosylase F.